The chain runs to 408 residues: Energy-coupling factor transporter ATP-binding protein EcfA1 (408 aa).

The 235-residue stretch at Ile140–Asp374 folds into the ABC transporter domain. Gly174–Ser181 contacts ATP.

It belongs to the ABC transporter superfamily. Energy-coupling factor EcfA family. In terms of assembly, forms a stable energy-coupling factor (ECF) transporter complex composed of 2 membrane-embedded substrate-binding proteins (S component), 2 ATP-binding proteins (A component) and 2 transmembrane proteins (T component).

Its subcellular location is the cell membrane. Functionally, ATP-binding (A) component of a common energy-coupling factor (ECF) ABC-transporter complex. Unlike classic ABC transporters this ECF transporter provides the energy necessary to transport a number of different substrates. The protein is Energy-coupling factor transporter ATP-binding protein EcfA1 of Mycoplasma capricolum subsp. capricolum (strain California kid / ATCC 27343 / NCTC 10154).